We begin with the raw amino-acid sequence, 214 residues long: MRIDPKRSRLKMVEEQIAARGVADKNVLDAMRRVPRHMFVQDALASRAYSDSALPIGEGQTISQPYIVAVMSELLQIESGHKVLEIGTGSGYQAAVLAEMGADVFSVERIRKLFISARKLLFDMRYFNIQLKLDDGTMGWPENAPYDRIIVTAGGPEIPQYLIDQLADPGILVIPVGGQRRVQRLMLVTKTDGKIETTDMGGCAFVDLVGKQGW.

Residue S63 is part of the active site.

This sequence belongs to the methyltransferase superfamily. L-isoaspartyl/D-aspartyl protein methyltransferase family.

It localises to the cytoplasm. It carries out the reaction [protein]-L-isoaspartate + S-adenosyl-L-methionine = [protein]-L-isoaspartate alpha-methyl ester + S-adenosyl-L-homocysteine. In terms of biological role, catalyzes the methyl esterification of L-isoaspartyl residues in peptides and proteins that result from spontaneous decomposition of normal L-aspartyl and L-asparaginyl residues. It plays a role in the repair and/or degradation of damaged proteins. The sequence is that of Protein-L-isoaspartate O-methyltransferase from Maridesulfovibrio salexigens (strain ATCC 14822 / DSM 2638 / NCIMB 8403 / VKM B-1763) (Desulfovibrio salexigens).